The following is a 278-amino-acid chain: Poly(3-hydroxyoctanoate) depolymerase (278 aa).

A signal peptide spans 1-33 (MPLRTLLCGLLLAVCLGQHALAASRCSERPRTL).

It localises to the secreted. It carries out the reaction Hydrolyzes the polyester poly{oxycarbonyl[(R)-2-pentylethylene]} to oligomers.. Its function is as follows. Hydrolysis of poly(3-hydroxyoctanoic acid). In Pseudomonas fluorescens, this protein is Poly(3-hydroxyoctanoate) depolymerase (phaZ).